The following is a 462-amino-acid chain: Cysteine--tRNA ligase (462 aa).

Cys29 is a Zn(2+) binding site. Positions 31-41 (PTVYDHAHIGN) match the 'HIGH' region motif. Residues Cys214, His239, and Glu243 each contribute to the Zn(2+) site. Residues 272 to 276 (KMSKS) carry the 'KMSKS' region motif. Lys275 contributes to the ATP binding site.

The protein belongs to the class-I aminoacyl-tRNA synthetase family. In terms of assembly, monomer. The cofactor is Zn(2+).

It localises to the cytoplasm. The catalysed reaction is tRNA(Cys) + L-cysteine + ATP = L-cysteinyl-tRNA(Cys) + AMP + diphosphate. The protein is Cysteine--tRNA ligase of Azorhizobium caulinodans (strain ATCC 43989 / DSM 5975 / JCM 20966 / LMG 6465 / NBRC 14845 / NCIMB 13405 / ORS 571).